The chain runs to 564 residues: Septin-9 (564 aa).

Methionine 1 carries the N-acetylmethionine modification. A Phosphoserine modification is found at serine 12. Threonine 24 and threonine 31 each carry phosphothreonine. Disordered regions lie at residues 38–165 (VASS…PVTD) and 178–224 (PAEA…DSEV). Residue lysine 44 is modified to N6-acetyllysine. 3 positions are modified to phosphoserine: serine 64, serine 67, and serine 71. A compositionally biased stretch (polar residues) spans 95 to 109 (DISSKQVESTASTPG). The segment covering 116-134 (KRAEVLGHKTPEPVPRRTE) has biased composition (basic and acidic residues). Threonine 125 bears the Phosphothreonine mark. Residues 190-203 (TLENSEAPMSQLQS) are compositionally biased toward polar residues. A Phosphotyrosine modification is found at tyrosine 258. Positions 275–546 (QGFEFNIMVV…EAYRVKRLNE (272 aa)) constitute a Septin-type G domain. A G1 motif region spans residues 285–292 (GQSGLGKS). A GTP-binding site is contributed by 285–292 (GQSGLGKS). 2 positions are modified to phosphoserine: serine 307 and serine 312. GTP is bound by residues threonine 319, glycine 345, 425–433 (KADTLTLEE), glycine 480, and arginine 495. The segment at 342–345 (DTPG) is G3 motif. Residues 424–427 (AKAD) are G4 motif.

This sequence belongs to the TRAFAC class TrmE-Era-EngA-EngB-Septin-like GTPase superfamily. Septin GTPase family. As to quaternary structure, septins polymerize into heterooligomeric protein complexes that form filaments, and associate with cellular membranes, actin filaments, and microtubules. GTPase activity is required for filament formation. Interacts with SEPTIN2, SEPTIN6, SEPTIN7, SEPTIN11 and SEPTIN14. Interacts with RTKN and ARHGEF18. As to expression, expressed in the brain, mainly in the perikarya and processes of astrocytes in the cerebellum, dentate gyrus and corpus callosum (at protein level). In the sciatic nerve, highly expressed in Schwann cells (at protein level). Isoforms are differentially expressed in testes, kidney, liver, heart, spleen and brain. Undetectable in skeletal muscle.

The protein localises to the cytoplasm. It localises to the cytoskeleton. Its function is as follows. Filament-forming cytoskeletal GTPase. May play a role in cytokinesis (Potential). In Rattus norvegicus (Rat), this protein is Septin-9.